The primary structure comprises 205 residues: Protein Rcp (205 aa).

This sequence belongs to the NAD(P)-dependent epimerase/dehydratase family.

This chain is Protein Rcp (rcp), found in Vibrio cholerae serotype O1 (strain ATCC 39315 / El Tor Inaba N16961).